Here is a 122-residue protein sequence, read N- to C-terminus: Large ribosomal subunit protein uL18 (122 aa).

The span at 1–21 (MSKLSRKQQTQKRHRRLRRHL) shows a compositional bias: basic residues. The tract at residues 1 to 26 (MSKLSRKQQTQKRHRRLRRHLTGTSD) is disordered.

This sequence belongs to the universal ribosomal protein uL18 family. Part of the 50S ribosomal subunit; part of the 5S rRNA/L5/L18/L25 subcomplex. Contacts the 5S and 23S rRNAs.

This is one of the proteins that bind and probably mediate the attachment of the 5S RNA into the large ribosomal subunit, where it forms part of the central protuberance. The polypeptide is Large ribosomal subunit protein uL18 (Parasynechococcus marenigrum (strain WH8102)).